Reading from the N-terminus, the 228-residue chain is tRNA (guanine-N(1)-)-methyltransferase (228 aa).

Residues G108 and 127 to 132 (VGDFIL) contribute to the S-adenosyl-L-methionine site.

This sequence belongs to the RNA methyltransferase TrmD family. In terms of assembly, homodimer.

The protein resides in the cytoplasm. It carries out the reaction guanosine(37) in tRNA + S-adenosyl-L-methionine = N(1)-methylguanosine(37) in tRNA + S-adenosyl-L-homocysteine + H(+). In terms of biological role, specifically methylates guanosine-37 in various tRNAs. This is tRNA (guanine-N(1)-)-methyltransferase from Metamycoplasma arthritidis (strain 158L3-1) (Mycoplasma arthritidis).